The sequence spans 333 residues: Fructose-1,6-bisphosphatase class 1 1 (333 aa).

Positions 81, 100, 102, and 103 each coordinate Mg(2+). Substrate is bound by residues 103-106 (DGSS) and Asn191. Glu263 lines the Mg(2+) pocket.

This sequence belongs to the FBPase class 1 family. As to quaternary structure, homotetramer. Mg(2+) is required as a cofactor.

It localises to the cytoplasm. The catalysed reaction is beta-D-fructose 1,6-bisphosphate + H2O = beta-D-fructose 6-phosphate + phosphate. The protein operates within carbohydrate biosynthesis; Calvin cycle. This Cereibacter sphaeroides (strain ATCC 17023 / DSM 158 / JCM 6121 / CCUG 31486 / LMG 2827 / NBRC 12203 / NCIMB 8253 / ATH 2.4.1.) (Rhodobacter sphaeroides) protein is Fructose-1,6-bisphosphatase class 1 1.